The sequence spans 488 residues: MIPVVALVGRPNVGKSTLFNRLTRTRDALVADFPGLTRDRKYGRAFLSGYEFIVVDTGGIDGTEEGIETHMAEQSLAAIEEADVVLFLTDARAGLTAADQAICEHLRRREKTTFVVANKVDGIDADSACAEFWALGLGEVYQMAAAQGRGVTNMIEYALAPYAEALGLNRDGDEDEDEEEREYSEEEAEAEQKRLQDLPIKMAIIGKPNVGKSTLTNRILGEERVVVYDSPGTTRDSIYIPMERDGREYVMIDTAGVRRRSKVHETVEKFSVIKTLKAVEDCNVVLLIIDAREGIAEQDLGLLGFALNAGRALVIAVNKWDGIDQDIKDRVKSELDRRLGFIDFARIHFISALHGTGVGHLFESVQEAYDSATRRVSTSMLTRIMQMAQDDHQPPLVNGRRVKLKYAHAGGYNPPIVVVHGNQVKKLPDSYKRFMMNYYRRSLKVMGTPIQIRFQDSANPFEGMNTKKLTVSQERRRKRMMTHIKDKK.

An EngA-type G 1 domain is found at proline 3–leucine 166. GTP contacts are provided by residues glycine 9 to serine 16, aspartate 56 to isoleucine 60, and asparagine 118 to aspartate 121. Residues leucine 168–glutamate 191 are disordered. The segment covering glycine 172 to glutamate 189 has biased composition (acidic residues). The region spanning isoleucine 200–threonine 373 is the EngA-type G 2 domain. GTP-binding positions include glycine 206–serine 213, aspartate 253–valine 257, and asparagine 318–aspartate 321. The KH-like domain maps to arginine 374 to alanine 458.

It belongs to the TRAFAC class TrmE-Era-EngA-EngB-Septin-like GTPase superfamily. EngA (Der) GTPase family. In terms of assembly, associates with the 50S ribosomal subunit.

GTPase that plays an essential role in the late steps of ribosome biogenesis. This chain is GTPase Der, found in Shewanella sediminis (strain HAW-EB3).